A 238-amino-acid chain; its full sequence is Sugar fermentation stimulation protein homolog (238 aa).

Belongs to the SfsA family.

The polypeptide is Sugar fermentation stimulation protein homolog (Alteromonas mediterranea (strain DSM 17117 / CIP 110805 / LMG 28347 / Deep ecotype)).